The chain runs to 1430 residues: 3'-5' RNA helicase YTHDC2 (1430 aa).

Residues 1–37 (MSRPSSVSPRQPAPGGGGGGGPSPCGPGGGGRAKGLK) form a disordered region. The span at 14–33 (PGGGGGGGPSPCGPGGGGRA) shows a compositional bias: gly residues. Residues 38–106 (DIRIDEEVKI…NRYLTVKKKD (69 aa)) form the R3H domain. One can recognise a Helicase ATP-binding domain in the interval 203 to 369 (VKIIKENKVV…FGSCPVIYIQ (167 aa)). An ATP-binding site is contributed by 216 to 223 (GETGSGKT). Residues 316–319 (DEVH) carry the DEAH box motif. 2 ANK repeats span residues 506-538 (TSAT…SKAS) and 539-571 (NGWM…FGNL). Residues 612–784 (LLYNICHSCD…ELCLHTKLLA (173 aa)) enclose the Helicase C-terminal domain. S1089, S1090, and S1092 each carry phosphoserine. The segment covering 1164-1174 (EQSAGLQQPSG) has biased composition (polar residues). Residues 1164–1288 (EQSAGLQQPS…SPSPRPNMPV (125 aa)) are disordered. The segment covering 1191–1200 (SSWRSNNSRK) has biased composition (low complexity). S1202 carries the phosphoserine modification. The span at 1231–1249 (KYKDRGILHPKRGTEDRSD) shows a compositional bias: basic and acidic residues. A compositionally biased stretch (low complexity) spans 1250 to 1264 (QSSLKSTDSSSYPSP). Residues S1263, S1267, and S1281 each carry the phosphoserine modification. Residues 1288-1418 (VRYFIMKSSN…LVGEQLLQLW (131 aa)) form the YTH domain. RNA-binding positions include 1294 to 1296 (KSS), W1310, and W1360.

This sequence belongs to the DEAD box helicase family. DEAH subfamily. In terms of assembly, interacts with MEIOC; binds transcripts that regulate the mitotic cell cycle inhibiting progression into metaphase, thereby allowing meiotic prophase to proceed normally. Interacts (via ANK repeats) with XRN1. Interacts with ZCCHC4. Associates with the small ribosomal subunit. Interacts with RBM46. Expressed in testis. Not detected in spermatogonia next to the tubule wall but is strongly expressed in spermatocytes, suggesting that it is up-regulated in germ cells upon entry into meiosis.

Its subcellular location is the cytoplasm. It is found in the perinuclear region. It carries out the reaction ATP + H2O = ADP + phosphate + H(+). Functionally, 3'-5' RNA helicase that plays a key role in the male and female germline by promoting transition from mitotic to meiotic divisions in stem cells. Specifically recognizes and binds N6-methyladenosine (m6A)-containing RNAs, a modification present at internal sites of mRNAs and some non-coding RNAs that plays a role in the efficiency of RNA processing and stability. Essential for ensuring a successful progression of the meiotic program in the germline by regulating the level of m6A-containing RNAs. Acts by binding and promoting degradation of m6A-containing mRNAs: the 3'-5' RNA helicase activity is required for this process and RNA degradation may be mediated by XRN1 exoribonuclease. Required for both spermatogenesis and oogenesis. The protein is 3'-5' RNA helicase YTHDC2 of Homo sapiens (Human).